The following is a 263-amino-acid chain: L-erythrulose-1-phosphate isomerase (263 aa).

Catalysis depends on His-106, which acts as the Electrophile. The active-site Proton acceptor is the Glu-178.

It belongs to the triosephosphate isomerase family.

The enzyme catalyses L-erythrulose 1-phosphate = D-erythrulose 4-phosphate. It functions in the pathway carbohydrate metabolism; L-threitol degradation. Functionally, catalyzes the isomerization of L-erythrulose-1P to D-erythrulose-4P. Involved in the degradation pathway of L-threitol, that allows M.smegmatis to grow on this compound as the sole carbon source. This is L-erythrulose-1-phosphate isomerase from Mycolicibacterium smegmatis (strain ATCC 700084 / mc(2)155) (Mycobacterium smegmatis).